The chain runs to 187 residues: Macro domain-containing protein MM_0177 (187 aa).

The Macro domain occupies 8–187 (VEEGIRMELN…SIKKALSKIL (180 aa)).

It belongs to the MacroD-type family.

The chain is Macro domain-containing protein MM_0177 from Methanosarcina mazei (strain ATCC BAA-159 / DSM 3647 / Goe1 / Go1 / JCM 11833 / OCM 88) (Methanosarcina frisia).